The primary structure comprises 752 residues: Iron-sulfur clusters transporter ABCB7, mitochondrial (752 aa).

The N-terminal 22 residues, 1–22, are a transit peptide targeting the mitochondrion; sequence MALLAMHSWRWAAAAAAFEKRR. Residues 23–140 lie on the Mitochondrial matrix side of the membrane; it reads HSAILIRPLV…KDRPDLRARV (118 aa). Residues 140–436 enclose the ABC transmembrane type-1 domain; the sequence is VAISLGFLGG…LGTVYRETRQ (297 aa). A helical transmembrane segment spans residues 141–161; it reads AISLGFLGGAKAMNIVVPFMF. The Mitochondrial intermembrane segment spans residues 162–185; that stretch reads KYAVDSLNQMSGNMLNLSDAPNTV. Residues 186 to 206 form a helical membrane-spanning segment; sequence ATMATAVLIGYGVSRAGAAFF. Residues 207–259 are Mitochondrial matrix-facing; the sequence is NEVRNAVFGKVAQNSIRRIAKNVFLHLHNLDLGFHLSRQTGALSKAIDRGTRG. N6-acetyllysine occurs at positions 216 and 251. The helical transmembrane segment at 260-280 threads the bilayer; the sequence is ISFVLSALVFNLLPIMFEVML. The Mitochondrial intermembrane segment spans residues 281 to 290; the sequence is VSGVLYYKCG. Residues 291 to 311 form a helical membrane-spanning segment; the sequence is AQFALVTLGTLGTYTAFTVAV. Over 312-382 the chain is Mitochondrial matrix; it reads TRWRTRFRIE…TLAMLNFGQS (71 aa). Position 315–319 (315–319) interacts with glutathione; sequence RTRFR. At Ser-336 the chain carries Phosphoserine. Phosphotyrosine is present on Tyr-340. The residue at position 342 (Thr-342) is a Phosphothreonine. 378 to 381 is a binding site for glutathione; the sequence is NFGQ. The helical transmembrane segment at 383-403 threads the bilayer; the sequence is AIFSVGLTAIMVLASQGIVAG. The Mitochondrial intermembrane portion of the chain corresponds to 404–409; sequence TLTVGD. Residues 410-430 form a helical membrane-spanning segment; the sequence is LVMVNGLLFQLSLPLNFLGTV. Position 428 (Gly-428) interacts with glutathione. Topologically, residues 431-752 are mitochondrial matrix; it reads YRETRQALID…SVKGCGNCSC (322 aa). One can recognise an ABC transporter domain in the interval 472 to 706; that stretch reads VAFDNVHFEY…PHSIYSEMWH (235 aa). ATP-binding positions include Tyr-481 and 505–516; that span reads GGSGSGKSTIVR.

The protein belongs to the ABC transporter superfamily. ABCB family. Heavy Metal importer (TC 3.A.1.210) subfamily. In terms of assembly, homodimer or heterodimer. Interacts with C10orf88/PAAT. Forms a complex with ABCB10 and FECH, where a dimeric FECH bridges ABCB7 and ABCB10 homodimers; this complex may be required for cellular iron homeostasis, mitochondrial function and heme biosynthesis. Interacts with FECH. Interacts with ATP5F1A. Interacts with COX4I1; this interaction allows the regulation of cellular iron homeostasis and cellular reactive oxygen species (ROS) levels in cardiomyocytes.

It is found in the mitochondrion inner membrane. It carries out the reaction (glutathione)4[2Fe(III)-2S] cluster(in) + ATP + H2O = (glutathione)4[2Fe(III)-2S] cluster(out) + ADP + phosphate + H(+). Its activity is regulated as follows. ATPase activity is stimulated by glutathione. Its function is as follows. Exports glutathione-coordinated iron-sulfur clusters such as [2Fe-2S]-(GS)4 cluster from the mitochondria to the cytosol in an ATP-dependent manner allowing the assembly of the cytosolic iron-sulfur (Fe/S) cluster-containing proteins and participates in iron homeostasis. Moreover, through a functional complex formed of ABCB7, FECH and ABCB10, also plays a role in the cellular iron homeostasis, mitochondrial function and heme biosynthesis. In cardiomyocytes, regulates cellular iron homeostasis and cellular reactive oxygen species (ROS) levels through its interaction with COX4I1. May also play a role in hematopoiesis. This Homo sapiens (Human) protein is Iron-sulfur clusters transporter ABCB7, mitochondrial.